A 205-amino-acid chain; its full sequence is MEATLPVLDAKTAALKRRSIRRYRKDPVPEGLLREILEAALRAPSAWNLQPWRIVVVRDPATKRALREAAFGQAHVEEAPVVLVLYADLEDALAHLDEVIHPGVQGERREAQKQAIQRAFAAMGQEARKAWASGQSYILLGYLLLLLEAYGLGSVPMLGFDPERVRAILGLPSHAAIPALVALGYPAEEGYPSHRLPLERVVLWR.

FMN-binding positions include 17-21 (RRSIR), Gln73, 158-159 (LG), and Arg195.

The protein belongs to the nitroreductase family. In terms of assembly, homodimer. The cofactor is FMN.

The catalysed reaction is a ubiquinone + NADH + 5 H(+)(in) = a ubiquinol + NAD(+) + 4 H(+)(out). Its function is as follows. Can oxidize either NADH or NADPH with a preference for NADH. Can catalyze electron transfer from NADH to various electron acceptors which include, in addition to molecular oxygen, cytochrome c, 2,6 dichlorphenolindophenol, methylene blue, ferricyanide or P-nitroblue tetrazolium. In Thermus thermophilus (strain ATCC 27634 / DSM 579 / HB8), this protein is NADH dehydrogenase (nox).